The sequence spans 397 residues: DNA-directed RNA polymerase subunit Rpo1C (397 aa).

This sequence belongs to the RNA polymerase beta' chain family. Part of the RNA polymerase complex.

The protein localises to the cytoplasm. It carries out the reaction RNA(n) + a ribonucleoside 5'-triphosphate = RNA(n+1) + diphosphate. In terms of biological role, DNA-dependent RNA polymerase (RNAP) catalyzes the transcription of DNA into RNA using the four ribonucleoside triphosphates as substrates. Forms part of the jaw domain. This is DNA-directed RNA polymerase subunit Rpo1C from Methanococcus aeolicus (strain ATCC BAA-1280 / DSM 17508 / OCM 812 / Nankai-3).